Here is a 445-residue protein sequence, read N- to C-terminus: Peptide chain release factor 1, mitochondrial (445 aa).

Residues 1-61 (MNRHLCVWLF…LLSKNWSRRY (61 aa)) constitute a mitochondrion transit peptide. Residues 297 to 361 (PKDLRIDTFR…LRARLYQQII (65 aa)) form a GGQ domain region. The GGQ signature appears at 311 to 313 (GGQ). At Gln313 the chain carries N5-methylglutamine.

Belongs to the prokaryotic/mitochondrial release factor family. Post-translationally, methylation of glutamine in the GGQ triplet by HEMK1 is conserved from bacteria to mammals.

The protein localises to the mitochondrion. In terms of biological role, mitochondrial peptide chain release factor that directs the termination of translation in response to the peptide chain non-canonical stop codons AGG and AGA. Non-canonical termination codons AGG and AGA are found at the end of MT-CO1/COX1 and MT-ND6/ND6 open reading frames, respectively. Recognizes non-canonical stop codons via a network of interactions between the codon, MTRF1 and the ribosomal RNA (rRNA): in contrast to other translation release factors, which identify the codon in the A-site via direct interactions of amino acid side chains with the bases, MTRF1 repositions the first 2 bases of the stop codon to use an intricate network of interactions that includes residues of the release factor, the rRNA of the small ribosomal subunit, as well as neighboring bases of the mRNA. In Homo sapiens (Human), this protein is Peptide chain release factor 1, mitochondrial.